Consider the following 242-residue polypeptide: Small ribosomal subunit protein uS5 (242 aa).

Positions 1 to 14 (MADENSTGPGNQPE) are enriched in polar residues. Residues 1 to 65 (MADENSTGPG…DRRPRDEDGG (65 aa)) form a disordered region. The span at 41-65 (DGGRGGRDGGRGRRDDRRPRDEDGG) shows a compositional bias: basic and acidic residues. One can recognise an S5 DRBM domain in the interval 68 to 131 (LIEKLVHINR…AAAKKAMIRV (64 aa)). Positions 204-242 (EQTSPKSVAQRRGKKVSDLIKRGGASDRAAEAEAAAVTE) are disordered. The segment covering 218 to 234 (KVSDLIKRGGASDRAAE) has biased composition (basic and acidic residues).

The protein belongs to the universal ribosomal protein uS5 family. In terms of assembly, part of the 30S ribosomal subunit. Contacts proteins S4 and S8.

Functionally, with S4 and S12 plays an important role in translational accuracy. Its function is as follows. Located at the back of the 30S subunit body where it stabilizes the conformation of the head with respect to the body. This chain is Small ribosomal subunit protein uS5, found in Sphingopyxis alaskensis (strain DSM 13593 / LMG 18877 / RB2256) (Sphingomonas alaskensis).